We begin with the raw amino-acid sequence, 3114 residues long: Centromere protein F (3114 aa).

The interaction with SNAP25 and required for localization to the cytoplasm stretch occupies residues 1–481; it reads MSWALEEWKE…IKENELRRSM (481 aa). Residues 13 to 131 adopt a coiled-coil conformation; that stretch reads PTRALQKIQE…KSELERSQQA (119 aa). Residue serine 106 is modified to Phosphoserine. Phosphothreonine is present on residues threonine 144, threonine 151, and threonine 154. A Phosphotyrosine modification is found at tyrosine 158. Polar residues predominate over residues 211-235; that stretch reads QASSSVFSWQQEKTPSHLSSNSQRT. A disordered region spans residues 211–236; the sequence is QASSSVFSWQQEKTPSHLSSNSQRTP. 2 positions are modified to phosphoserine: serine 242 and serine 276. Positions 280–685 form a coiled coil; sequence LDQLKAQNQE…SVEIRNLHNV (406 aa). Phosphoserine is present on residues serine 773, serine 783, serine 821, serine 834, serine 838, and serine 876. Coiled coils occupy residues 899-989 and 1196-1244; these read VAET…LNQE and LEVK…IRGD. A phosphoserine mark is found at serine 1248, serine 1255, and serine 1259. The stretch at 1549–1646 forms a coiled coil; that stretch reads VEELESLCEV…ELEVARLQLQ (98 aa). Residues serine 1651, serine 1652, and serine 1654 each carry the phosphoserine modification. 2 disordered regions span residues 1667–1690 and 1710–1746; these read RNES…KHDV and TETG…SECI. The span at 1669–1690 shows a compositional bias: basic and acidic residues; the sequence is ESCDISKEHTSETTERTPKHDV. Residue serine 1726 is modified to Phosphoserine. A Phosphothreonine modification is found at threonine 1862. Residues serine 1868 and serine 1892 each carry the phosphoserine modification. Coiled coils occupy residues 1890–2078 and 2107–2891; these read NDSW…LQAR and LSST…LCSQ. Positions 2026 to 2351 are interaction with NDE1 and NDEL1; it reads LLKDKTHLQE…ERELEIARTN (326 aa). 2 tandem repeats follow at residues 2111–2290 and 2293–2472. The tract at residues 2111–2472 is 2 X 177 AA tandem repeats; the sequence is QEEVHQLRRG…ACKAKEQNLS (362 aa). Positions 2392-2829 are sufficient for self-association; that stretch reads SEKENLTNEL…QAAQEKQKTG (438 aa). The segment at 2392 to 3017 is sufficient for centromere localization; it reads SEKENLTNEL…ATRTSPRLAA (626 aa). Serine 2416 and serine 2417 each carry phosphoserine. At lysine 2779 the chain carries N6-acetyllysine. The interval 2831 to 3017 is sufficient for nuclear localization; it reads VMDTKVDELT…ATRTSPRLAA (187 aa). Residues 2891-2977 form a disordered region; sequence QQSKQDSRGS…AEDTEGTEFE (87 aa). 4 positions are modified to phosphoserine: serine 2900, serine 2911, serine 2922, and serine 2936. Residues 2919–2936 carry the Nuclear localization signal motif; sequence KRLSSGQNKASGKRQRSS. Threonine 2949 carries the post-translational modification Phosphothreonine. Phosphoserine is present on residues serine 2952, serine 2998, serine 3023, and serine 3026. The interval 3024 to 3114 is disordered; sequence PLSLGKENLA…SNGSENCKVQ (91 aa). The segment covering 3033–3045 has biased composition (polar residues); it reads AESSKPTAGGSRS. Phosphoserine is present on residues serine 3054, serine 3079, and serine 3083. Positions 3079-3089 are enriched in basic and acidic residues; it reads SPTDSPREGLR. The segment covering 3105–3114 has biased composition (polar residues); that stretch reads SNGSENCKVQ. At cysteine 3111 the chain carries Cysteine methyl ester. Cysteine 3111 carries S-farnesyl cysteine lipidation. Positions 3112–3114 are cleaved as a propeptide — removed in mature form; sequence KVQ.

The protein belongs to the centromere protein F family. In terms of assembly, interacts with and STX4 (via C-terminus). Interacts (via N-terminus) with RBL1, RBL2 and SNAP25. Self-associates. Interacts with CENP-E and BUBR1 (via C-terminus). Interacts (via C-terminus) with NDE1, NDEL1 and RB1. Hyperphosphorylated during mitosis.

Its subcellular location is the cytoplasm. The protein localises to the perinuclear region. The protein resides in the nucleus matrix. It localises to the chromosome. It is found in the centromere. Its subcellular location is the kinetochore. The protein localises to the cytoskeleton. The protein resides in the spindle. Functionally, required for kinetochore function and chromosome segregation in mitosis. Required for kinetochore localization of dynein, LIS1, NDE1 and NDEL1. Regulates recycling of the plasma membrane by acting as a link between recycling vesicles and the microtubule network though its association with STX4 and SNAP25. Acts as a potential inhibitor of pocket protein-mediated cellular processes during development by regulating the activity of RB proteins during cell division and proliferation. May play a regulatory or permissive role in the normal embryonic cardiomyocyte cell cycle and in promoting continued mitosis in transformed, abnormally dividing neonatal cardiomyocytes. Interaction with RB directs embryonic stem cells toward a cardiac lineage. Involved in the regulation of DNA synthesis and hence cell cycle progression, via its C-terminus. Has a potential role regulating skeletal myogenesis and in cell differentiation in embryogenesis. Involved in dendritic cell regulation of T-cell immunity against chlamydia. The sequence is that of Centromere protein F (CENPF) from Homo sapiens (Human).